Consider the following 354-residue polypeptide: UDP-N-acetylglucosamine--N-acetylmuramyl-(pentapeptide) pyrophosphoryl-undecaprenol N-acetylglucosamine transferase (354 aa).

Residues 15–17 (TGG), Asn127, Arg163, Ser191, Ile244, 263–268 (ALTVSE), and Gln288 contribute to the UDP-N-acetyl-alpha-D-glucosamine site.

It belongs to the glycosyltransferase 28 family. MurG subfamily.

Its subcellular location is the cell inner membrane. The catalysed reaction is di-trans,octa-cis-undecaprenyl diphospho-N-acetyl-alpha-D-muramoyl-L-alanyl-D-glutamyl-meso-2,6-diaminopimeloyl-D-alanyl-D-alanine + UDP-N-acetyl-alpha-D-glucosamine = di-trans,octa-cis-undecaprenyl diphospho-[N-acetyl-alpha-D-glucosaminyl-(1-&gt;4)]-N-acetyl-alpha-D-muramoyl-L-alanyl-D-glutamyl-meso-2,6-diaminopimeloyl-D-alanyl-D-alanine + UDP + H(+). It functions in the pathway cell wall biogenesis; peptidoglycan biosynthesis. Functionally, cell wall formation. Catalyzes the transfer of a GlcNAc subunit on undecaprenyl-pyrophosphoryl-MurNAc-pentapeptide (lipid intermediate I) to form undecaprenyl-pyrophosphoryl-MurNAc-(pentapeptide)GlcNAc (lipid intermediate II). This Aliivibrio fischeri (strain MJ11) (Vibrio fischeri) protein is UDP-N-acetylglucosamine--N-acetylmuramyl-(pentapeptide) pyrophosphoryl-undecaprenol N-acetylglucosamine transferase.